The chain runs to 113 residues: MNTVRVTFLLVFVLAVSLGQADKDENRMEMQEKTEQGKSYLDFAENLLLQKLEELEAKLLEEDSEESRNSRQKRCIGEGVPCDENDPRCCSGLVCLKPTLHGIWYKSYYYYKK.

The N-terminal stretch at 1–21 (MNTVRVTFLLVFVLAVSLGQA) is a signal peptide. A propeptide spanning residues 22–74 (DKDENRMEMQEKTEQGKSYLDFAENLLLQKLEELEAKLLEEDSEESRNSRQKR) is cleaved from the precursor. A disordered region spans residues 61–83 (EEDSEESRNSRQKRCIGEGVPCD). 2 disulfides stabilise this stretch: Cys-75/Cys-90 and Cys-82/Cys-95.

The protein belongs to the neurotoxin 14 (magi-1) family. 01 (HNTX-16) subfamily. As to expression, expressed by the venom gland.

It is found in the secreted. In terms of biological role, probable ion channel inhibitor. The polypeptide is U11-theraphotoxin-Hhn1o (Cyriopagopus hainanus (Chinese bird spider)).